Consider the following 349-residue polypeptide: MNQEELFDVTVIGGGPAGLYSAFYSGLREMKTKIIEFQPQLGGKIHVYPEKMIWDIGGLLPVTGEKLIEQLVQQGLTFQPEVVLNTKIESIIRNQDGIFTLKTSSGEEHFSKTVIVATGSGILNPQKLSIEGAERFEVSNLNYTVKSLKRFKDKTVIISGGGNSAIDWANELEPIAKKVYLTYRKEELSGHEAQVKQLMNSSAECFFNTSITKLIAGDNHEAIEYVELTNHETGEVSHLSIDEVIINHGYERDITLLENSELDVAIVDNYYIAGNANSESSVDGLYAAGDILKHDGKLHLIAGAFQDAGNAVNKAKQFIQPDASEYGMVSSHNEVFKKRNRELIKQMMK.

The FAD site is built by Glu-36, Lys-44, Tyr-48, Ile-88, Leu-123, Asp-290, and Ser-331.

It belongs to the ferredoxin--NADP reductase type 2 family. Homodimer. The cofactor is FAD.

It catalyses the reaction 2 reduced [2Fe-2S]-[ferredoxin] + NADP(+) + H(+) = 2 oxidized [2Fe-2S]-[ferredoxin] + NADPH. The protein is Ferredoxin--NADP reductase 1 of Bacillus mycoides (strain KBAB4) (Bacillus weihenstephanensis).